The chain runs to 407 residues: 4-hydroxybenzoate polyprenyltransferase, mitochondrial (407 aa).

The N-terminal 20 residues, 1 to 20 (MAFFGLSRVSRRLLKSSVSV), are a transit peptide targeting the mitochondrion. The next 6 helical transmembrane spans lie at 137–157 (IGTW…ADPG), 162–182 (FKYM…GCTI), 210–230 (FQGI…LLQL), 254–274 (FTFW…LLGW), 279–299 (GSIA…WTLV), and 330–350 (LWLT…GFSA).

It belongs to the UbiA prenyltransferase family. Mg(2+) serves as cofactor. As to expression, expressed in flowers.

Its subcellular location is the mitochondrion inner membrane. It carries out the reaction an all-trans-polyprenyl diphosphate + 4-hydroxybenzoate = a 4-hydroxy-3-(all-trans-polyprenyl)benzoate + diphosphate. Its pathway is cofactor biosynthesis; ubiquinone biosynthesis. Functionally, catalyzes the prenylation of para-hydroxybenzoate (PHB) with an all-trans polyprenyl group. Mediates the second step in the final reaction sequence of coenzyme Q (CoQ) biosynthesis, which is the condensation of the polyisoprenoid side chain with PHB, generating the first membrane-bound Q intermediate. Required for embryo development. The sequence is that of 4-hydroxybenzoate polyprenyltransferase, mitochondrial from Arabidopsis thaliana (Mouse-ear cress).